The following is a 431-amino-acid chain: Nuclear bridge Ish domain protein les1 (431 aa).

The N-terminal stretch at 1-21 (MQPRFLLHGALLALGIQLCLS) is a signal peptide.

It localises to the nucleus inner membrane. Functionally, inner nuclear envelope protein involved in nuclear fission, which is achieved via local disassembly of nuclear pores within the narrow bridge that links segregating daughter nuclei. Les1 restricts the process of local nuclear envelope breakdown to the bridge midzone to prevent the leakage of material from daughter nuclei during mitosis. This Schizosaccharomyces pombe (strain 972 / ATCC 24843) (Fission yeast) protein is Nuclear bridge Ish domain protein les1.